The following is a 345-amino-acid chain: Heat-inducible transcription repressor HrcA (345 aa).

Belongs to the HrcA family.

Functionally, negative regulator of class I heat shock genes (grpE-dnaK-dnaJ and groELS operons). Prevents heat-shock induction of these operons. In Dehalococcoides mccartyi (strain ATCC BAA-2100 / JCM 16839 / KCTC 5957 / BAV1), this protein is Heat-inducible transcription repressor HrcA.